The sequence spans 262 residues: Thiazole synthase (262 aa).

Lys-96 (schiff-base intermediate with DXP) is an active-site residue. 1-deoxy-D-xylulose 5-phosphate-binding positions include Gly-157, Ala-184 to Gly-185, and Asn-206 to Thr-207.

The protein belongs to the ThiG family. As to quaternary structure, homotetramer. Forms heterodimers with either ThiH or ThiS.

The protein localises to the cytoplasm. The catalysed reaction is [ThiS sulfur-carrier protein]-C-terminal-Gly-aminoethanethioate + 2-iminoacetate + 1-deoxy-D-xylulose 5-phosphate = [ThiS sulfur-carrier protein]-C-terminal Gly-Gly + 2-[(2R,5Z)-2-carboxy-4-methylthiazol-5(2H)-ylidene]ethyl phosphate + 2 H2O + H(+). It participates in cofactor biosynthesis; thiamine diphosphate biosynthesis. Functionally, catalyzes the rearrangement of 1-deoxy-D-xylulose 5-phosphate (DXP) to produce the thiazole phosphate moiety of thiamine. Sulfur is provided by the thiocarboxylate moiety of the carrier protein ThiS. In vitro, sulfur can be provided by H(2)S. The protein is Thiazole synthase of Legionella pneumophila (strain Paris).